The chain runs to 206 residues: Probable GTP-binding protein EngB (206 aa).

Residues 27-201 (SGIEVAFAGR…EEKLNQWYSK (175 aa)) form the EngB-type G domain. Residues 35–42 (GRSNAGKS), 62–66 (GRTQL), 80–83 (DLPG), 147–150 (TKAD), and 180–182 (FSS) each bind GTP. Residues serine 42 and threonine 64 each contribute to the Mg(2+) site.

It belongs to the TRAFAC class TrmE-Era-EngA-EngB-Septin-like GTPase superfamily. EngB GTPase family. It depends on Mg(2+) as a cofactor.

Necessary for normal cell division and for the maintenance of normal septation. This is Probable GTP-binding protein EngB from Idiomarina loihiensis (strain ATCC BAA-735 / DSM 15497 / L2-TR).